The primary structure comprises 215 residues: Uracil phosphoribosyltransferase (215 aa).

GTP is bound at residue 30–34 (KGMVR). 5-phospho-alpha-D-ribose 1-diphosphate-binding positions include Arg80, Arg105, and 139-147 (DPMIATAST). Residues Ile202 and 207-209 (GDA) contribute to the uracil site. Position 208 (Asp208) interacts with 5-phospho-alpha-D-ribose 1-diphosphate.

This sequence belongs to the UPRTase family. Mg(2+) is required as a cofactor.

The catalysed reaction is UMP + diphosphate = 5-phospho-alpha-D-ribose 1-diphosphate + uracil. It functions in the pathway pyrimidine metabolism; UMP biosynthesis via salvage pathway; UMP from uracil: step 1/1. With respect to regulation, allosterically activated by GTP. Catalyzes the conversion of uracil and 5-phospho-alpha-D-ribose 1-diphosphate (PRPP) to UMP and diphosphate. The polypeptide is Uracil phosphoribosyltransferase (Metallosphaera sedula (strain ATCC 51363 / DSM 5348 / JCM 9185 / NBRC 15509 / TH2)).